The sequence spans 754 residues: 5-methyltetrahydropteroyltriglutamate--homocysteine methyltransferase (754 aa).

5-methyltetrahydropteroyltri-L-glutamate is bound by residues 16–19 (RELK) and lysine 114. Residues 430–432 (IGS) and glutamate 483 each bind L-homocysteine. L-methionine is bound by residues 430-432 (IGS) and glutamate 483. Residues 514 to 515 (RC) and tryptophan 560 each bind 5-methyltetrahydropteroyltri-L-glutamate. Position 598 (aspartate 598) interacts with L-homocysteine. An L-methionine-binding site is contributed by aspartate 598. Glutamate 604 is a binding site for 5-methyltetrahydropteroyltri-L-glutamate. Zn(2+) is bound by residues histidine 640, cysteine 642, and glutamate 664. The Proton donor role is filled by histidine 693. Cysteine 725 serves as a coordination point for Zn(2+).

This sequence belongs to the vitamin-B12 independent methionine synthase family. Requires Zn(2+) as cofactor.

The enzyme catalyses 5-methyltetrahydropteroyltri-L-glutamate + L-homocysteine = tetrahydropteroyltri-L-glutamate + L-methionine. Its pathway is amino-acid biosynthesis; L-methionine biosynthesis via de novo pathway; L-methionine from L-homocysteine (MetE route): step 1/1. Its function is as follows. Catalyzes the transfer of a methyl group from 5-methyltetrahydrofolate to homocysteine resulting in methionine formation. This Aeromonas salmonicida (strain A449) protein is 5-methyltetrahydropteroyltriglutamate--homocysteine methyltransferase.